The primary structure comprises 314 residues: tRNA uridine(34) hydroxylase (314 aa).

A Rhodanese domain is found at 135-229; it reads SDPDTIVIDT…YLEEVPEEES (95 aa). Cys-189 serves as the catalytic Cysteine persulfide intermediate.

It belongs to the TrhO family.

The enzyme catalyses uridine(34) in tRNA + AH2 + O2 = 5-hydroxyuridine(34) in tRNA + A + H2O. Functionally, catalyzes oxygen-dependent 5-hydroxyuridine (ho5U) modification at position 34 in tRNAs. The sequence is that of tRNA uridine(34) hydroxylase from Agrobacterium fabrum (strain C58 / ATCC 33970) (Agrobacterium tumefaciens (strain C58)).